Here is a 587-residue protein sequence, read N- to C-terminus: Serine/threonine-protein phosphatase 2A 65 kDa regulatory subunit A gamma isoform (587 aa).

Serine 2 is modified (N-acetylserine). 14 HEAT repeats span residues 2–42 (SMVD…ALGE), 44–80 (RTRKELIPFLSENNDDDDEVLLAMAEELGGFILYVGG), 81–119 (VEYAYVLLPPLETLSTVEETCVREKAVDSLCRIGAQMRE), 158–194 (DVLKTELRSIYGQLCQDDMPMVRRAAATNLGKFAATI), 197–235 (AHLKTDIMSMFEDLTQDDQDSVRLLAVEGCAALGKLLEP), 236–274 (QDCVAHILPVIVNFSQDKSWRVRYMVANQLYELCEAVGP), 276–313 (PTRTDLVPAYARLLCDNEAEVRIAAAGKVTKFCRILNP), 314–352 (ELAIQHILPCVKELSSDSSQHVRSALASVIMGMAPVLGK), 353–391 (DATIEHLLPIFLSLLKDEFPDVRLNIISKLDQVNQVIGI), 393–430 (LLSQSLLPAIVELAEDRHWRVRLAIIEYIPLLASQLGV), 432–469 (FFDEKLGALCMQWLQDKVHSIREAAANNLKRLAEEFGP), 470–508 (EWAMQHIVPQVLEMINNPHYLYRMTILRAVSLLAPVMGS), 509–547 (EITCSKLLPAVITASKDRVPNIKFNVAKMMQSLIPIVDQ), and 549–586 (VVENMIRPCLVELSEDPDVDVRYFANQALQSIDNVMMS).

It belongs to the phosphatase 2A regulatory subunit A family. PP2A consists of a common heterodimeric core enzyme, composed of a 36 kDa catalytic subunit (subunit C) and a 65 kDa constant regulatory subunit (subunit A), that associates with a variety of regulatory subunits such as subunits B (the R2/B/PR55/B55, R3/B''/PR72/PR130/PR59 and R5/B'/B56 families). Interacts with CHIP. Interacts with SRK2E/OST1. Post-translationally, ubiquitinated. CHIP-mediated ubiquitination enhances phosphatase activity after an abiotic stress such as low temperature or darkness. As to expression, expressed ubiquitously at stable levels. However, higher protein levels in roots and flowers (at protein level).

Its subcellular location is the cytoplasm. It is found in the cytosol. The protein resides in the nucleus. Functionally, the A subunit of protein phosphatase 2A serves as a scaffolding molecule to coordinate the assembly of the catalytic subunit and a variable regulatory B subunit. Involved during developmental process such as seedling and floral developments. Seems to act as a negative regulator of PP2A catalytic activity. In Arabidopsis thaliana (Mouse-ear cress), this protein is Serine/threonine-protein phosphatase 2A 65 kDa regulatory subunit A gamma isoform (PP2AA3).